The sequence spans 931 residues: Aftiphilin (931 aa).

Residues 1–49 (MEPDIIRMYSSSPPPLDNGAEDDEEDEFGEFGGFSEVSPSGVGFVDFDT) are disordered. Positions 19 to 29 (GAEDDEEDEFG) are enriched in acidic residues. The WXXF motif 1 signature appears at 28–31 (FGEF). Residues 33–45 (GFSEVSPSGVGFV) are compositionally biased toward low complexity. S151 carries the phosphoserine modification. Residues 371–381 (SVKTSDVNEIG) show a composition bias toward polar residues. Residues 371-454 (SVKTSDVNEI…PFVTSTQDSM (84 aa)) are disordered. Position 395 is a phosphoserine (S395). A WXXF motif 2 motif is present at residues 433-436 (FGDF). The span at 439 to 454 (ANGTTPPFVTSTQDSM) shows a compositional bias: polar residues. The short motif at 476 to 479 (FGEF) is the WXXF motif 3 element. Disordered stretches follow at residues 494 to 561 (TESD…SSAG) and 599 to 636 (WQSQ…LQEP). A compositionally biased stretch (basic and acidic residues) spans 516-530 (GGKDSKPDSKLKNGQ). T613 bears the Phosphothreonine mark. Low complexity predominate over residues 618–631 (SVSSAASKGAVASG). Positions 712 to 714 (YQW) match the CLTCL1/Clathrin-binding motif. A clathrin-binding region spans residues 821–825 (LLNLD).

Self-associates. Interacts with GGA1 (via GAE domain). Interacts with GGA3 (via GAE domain), AP1G1 (via GAE domain) and AP1G2 (via GAE domain). Component of the aftiphilin/p200/gamma-synergin complex, at least composed of AFTPH/aftiphilin, HEATR5B/p200a and SYNRG/gamma-synergin, which plays a role in the AP1G1/AP-1-mediated protein trafficking from early to recycling endosomes. Within the complex interacts with HEATR5B/p200a and SYNRG/gamma-synergin; the interactions are direct. Interacts with AP1G1/AP-1; the interaction is required to recruit AFTPH/aftiphilin to the perinuclear region of the cell. Interacts with CLTCL1/Clathrin.

It localises to the cytoplasm. It is found in the perinuclear region. The protein resides in the cytoplasmic vesicle. The protein localises to the clathrin-coated vesicle. Component of clathrin-coated vesicles. Component of the aftiphilin/p200/gamma-synergin complex, which plays roles in AP1G1/AP-1-mediated protein trafficking including the trafficking of transferrin from early to recycling endosomes, and the membrane trafficking of furin and the lysosomal enzyme cathepsin D between the trans-Golgi network (TGN) and endosomes. The sequence is that of Aftiphilin (Aftph) from Mus musculus (Mouse).